Here is a 556-residue protein sequence, read N- to C-terminus: Undecaprenyl phosphate-alpha-4-amino-4-deoxy-L-arabinose arabinosyl transferase (556 aa).

10 consecutive transmembrane segments (helical) span residues 88–108, 116–136, 179–199, 207–227, 258–278, 296–316, 319–339, 355–375, 384–404, and 410–430; these read FASVFSTALSALLVFWLAMML, LLAATIYLTSLLVYGIGTYSV, FMTKGFLALALPVISVLPVAL, LLLFGPLAIVVAVLLSAPWAL, APFWYYLPFLIVGTFPWLALL, FFLLCWMVMPLLFFSIAKGKL, YILPCFAPLALLMAAWISGLA, IVFGGVLGLAVAALGLGIIVP, LTIISGIVCFIGWIAFAAVSL, and WGYLVAGCPLFLALLVGGSIP.

Belongs to the glycosyltransferase 83 family.

Its subcellular location is the cell inner membrane. It catalyses the reaction 4-amino-4-deoxy-alpha-L-arabinopyranosyl di-trans,octa-cis-undecaprenyl phosphate + lipid IVA = lipid IIA + di-trans,octa-cis-undecaprenyl phosphate.. It participates in lipopolysaccharide metabolism; 4-amino-4-deoxy-beta-L-arabinose-lipid A biosynthesis. Catalyzes the transfer of the L-Ara4N moiety of the glycolipid undecaprenyl phosphate-alpha-L-Ara4N to lipid A. The modified arabinose is attached to lipid A and is required for resistance to polymyxin and cationic antimicrobial peptides. This is Undecaprenyl phosphate-alpha-4-amino-4-deoxy-L-arabinose arabinosyl transferase from Pectobacterium atrosepticum (strain SCRI 1043 / ATCC BAA-672) (Erwinia carotovora subsp. atroseptica).